Consider the following 93-residue polypeptide: UPF0298 protein lwe2074 (93 aa).

This sequence belongs to the UPF0298 family.

The protein localises to the cytoplasm. This is UPF0298 protein lwe2074 from Listeria welshimeri serovar 6b (strain ATCC 35897 / DSM 20650 / CCUG 15529 / CIP 8149 / NCTC 11857 / SLCC 5334 / V8).